The following is a 652-amino-acid chain: Anaphase-promoting complex subunit 4 (652 aa).

As to quaternary structure, the APC/C is composed of at least 13 subunits that stay tightly associated throughout the cell cycle: APC1, APC2, APC4, APC5, APC9, APC11, CDC16, CDC23, CDC26, CDC27, DOC1, MND2 and SWM1.

It localises to the cytoplasm. It is found in the nucleus. Its pathway is protein modification; protein ubiquitination. Its function is as follows. Component of the anaphase promoting complex/cyclosome (APC/C), a cell cycle-regulated E3 ubiquitin-protein ligase complex that controls progression through mitosis and the G1 phase of the cell cycle. The APC/C is thought to confer substrate specificity and, in the presence of ubiquitin-conjugating E2 enzymes, it catalyzes the formation of protein-ubiquitin conjugates that are subsequently degraded by the 26S proteasome. In early mitosis, the APC/C is activated by CDC20 and targets securin PDS1, the B-type cyclin CLB5, and other anaphase inhibitory proteins for proteolysis, thereby triggering the separation of sister chromatids at the metaphase-to-anaphase transition. In late mitosis and in G1, degradation of CLB5 allows activation of the APC/C by CDH1, which is needed to destroy CDC20 and the B-type cyclin CLB2 to allow exit from mitosis and creating the low CDK state necessary for cytokinesis and for reforming prereplicative complexes in G1 prior to another round of replication. The polypeptide is Anaphase-promoting complex subunit 4 (APC4) (Saccharomyces cerevisiae (strain ATCC 204508 / S288c) (Baker's yeast)).